Here is a 745-residue protein sequence, read N- to C-terminus: Protein PHOX1 (745 aa).

The span at 1–10 shows a compositional bias: basic residues; it reads MGKPTGKKKN. Residues 1-37 form a disordered region; sequence MGKPTGKKKNNNYTEMPPTESSTTGGGKTGKSFDRSA. TPR repeat units follow at residues 52–85, 90–125, and 126–159; these read ALEL…LPRD, AYLR…SPRF, and SKAL…EPEN. Positions 280–359 constitute a PB1 domain; that stretch reads TRTVKLVHGD…GSFRLYIAEV (80 aa). TPR repeat units lie at residues 406–441, 443–472, 494–528, and 553–586; these read EHWI…YTEA, EDIV…AMFN, ETIL…KSDF, and GEVD…WEEM.

As to quaternary structure, interacts with myosin XI-1 and XI-K.

The protein localises to the cytoplasmic vesicle membrane. Functionally, carboxylate clamp type tetratricopeptide repeat protein that may act as a potential Hsp90/Hsp70 co-chaperone. Contributes to polar growth of root hairs. The protein is Protein PHOX1 of Arabidopsis thaliana (Mouse-ear cress).